The sequence spans 200 residues: Phospholipase A2 inhibitor CNF (200 aa).

The first 19 residues, Met-1 to Ser-19, serve as a signal peptide directing secretion. Intrachain disulfides connect Cys-22-Cys-46, Cys-25-Cys-32, Cys-39-Cys-67, Cys-73-Cys-94, Cys-95-Cys-100, Cys-118-Cys-143, Cys-136-Cys-165, and Cys-169-Cys-191. An N-linked (GlcNAc...) asparagine; partial glycan is attached at Asn-176.

In terms of assembly, occurs as a mixture of oligomers. Tetrameric arrangement appears to be the predominant quaternary structure. Interacts with phospholipase A2 crotoxin basic subunit CBd; the interaction leads to dissociation of the CA-CB heterodimer and to inhibition of PLA2 activity of the CB subunit. In terms of processing, the carbohydrate moiety increases the inhibition capacity of CNF, but is not essential for activity and for oligomerization. Expressed by the liver.

It is found in the secreted. Functionally, inhibits the PLA2 activity of crotoxin (CTX) by replacing the acid subunit (CA) in the CTX complex. Displays a pro-inflammatory action through activation of important main signaling pathways for human leukocytes, in vitro. Abolishes both the muscle-paralyzing and muscle-damaging activities of CTX in mice phrenic nerve-diaphragm muscle preparations. The polypeptide is Phospholipase A2 inhibitor CNF (Crotalus durissus terrificus (South American rattlesnake)).